The following is an 83-amino-acid chain: DNA-directed RNA polymerase subunit Rpo5 (83 aa).

The protein belongs to the archaeal Rpo5/eukaryotic RPB5 RNA polymerase subunit family. As to quaternary structure, part of the RNA polymerase complex.

The protein resides in the cytoplasm. The catalysed reaction is RNA(n) + a ribonucleoside 5'-triphosphate = RNA(n+1) + diphosphate. Functionally, DNA-dependent RNA polymerase (RNAP) catalyzes the transcription of DNA into RNA using the four ribonucleoside triphosphates as substrates. This chain is DNA-directed RNA polymerase subunit Rpo5, found in Nitrosopumilus maritimus (strain SCM1).